Consider the following 444-residue polypeptide: MSDNDDDFMCDDDEDYGLEYSEDSNSEPDVDLENQYYNSKALKEEEPKAALASFQKVLDLENGEKGEWGFKALKQMIKINFRLCNYDEMMVRYKQLLTYIKSAVTRNHSEKSINSILDYISTSKNMALLQNFYETTLDALRDAKNDRLWFKTNTKLGKLYFDRSDFTKLQKILKQLHQSCQTDDGEDDLKKGTQLLEIYALEIQMYTVQKNNKKLKALYEQSLHIKSAIPHPLIMGVIRECGGKMHLREGEFEKAHTDFFEAFKNYDESGSPRRTTCLKYLVLANMLMKSGINPFDSQEAKPYKNDPEILAMTNLVNSYQNNDINEFETILRQHRSNIMADQFIREHIEDLLRNIRTQVLIKLIRPYKNIAIPFIANALNIEPAEVESLLVSCILDDTIKGRIDQVNQVLQLDKINSSASRYNALEKWSNQIQSLQFAVVQKMA.

The disordered stretch occupies residues 1 to 31 (MSDNDDDFMCDDDEDYGLEYSEDSNSEPDVD). Residues 255–417 (AHTDFFEAFK…QVLQLDKINS (163 aa)) enclose the PCI domain.

The protein belongs to the CSN2 family. In terms of assembly, component of the CSN complex, probably composed of CSN1b, alien/CSN2, CSN3, CSN4, CSN5, CSN6, CSN7 and CSN8. Interacts with Rpn6. Expressed during embryonic stages 11-14 in the muscle attachment sites (apodemes); pharynx attachment to the roof of the mouth and in the epidermis of the head for the dorsal and ventral prothoracic pharyngeal muscle attachment. From stage 16 onwards expression is seen in all thoracic and abdominal apodemes.

The protein localises to the cytoplasm. Its subcellular location is the nucleus. Component of the COP9 signalosome complex (CSN), a complex involved in various cellular and developmental processes. The CSN complex is an essential regulator of the ubiquitin (Ubl) conjugation pathway by mediating the deneddylation of the cullin subunits of the SCF-type E3 ligase complexes, leading to decrease the Ubl ligase activity of SCF. The CSN complex plays an essential role in oogenesis and embryogenesis and is required for proper photoreceptor R cell differentiation and promote lamina glial cell migration or axon targeting. It also promotes Ubl-dependent degradation of cyclin E (CycE) during early oogenesis. This Drosophila melanogaster (Fruit fly) protein is COP9 signalosome complex subunit 2.